The chain runs to 272 residues: MARLAAFDMDGTLLMPDHHLGEKTLSTLARLRERDITLTFATGRHALEMQHILGALSLDAYLITGNGTRVHSLEGELLHRDDLPADVAELVLYQQWDTRASMHIFNDDGWFTGKEIPALLQAFVYSGFRYQIIDVKKMPLGRVTKICFCGGHDDLTRLQIQLYEALGERAHLCFSATDCLEVLPVGCNKGAALTVLTQHLGLSLRDCMAFGDAMNDREMLGSVGSGFIMGNAMPQLRAELPHLPVIGHCRNQAVSHYLTHWLDYPHLPYSPE.

The Nucleophile role is filled by Asp-8. The Mg(2+) site is built by Asp-8, Asp-10, and Asp-212.

The protein belongs to the HAD-like hydrolase superfamily. Cof family. Mg(2+) is required as a cofactor.

It carries out the reaction 4-amino-2-methyl-5-(diphosphooxymethyl)pyrimidine + H2O = 4-amino-2-methyl-5-(phosphooxymethyl)pyrimidine + phosphate + H(+). In terms of biological role, catalyzes the hydrolysis of 4-amino-2-methyl-5-hydroxymethylpyrimidine pyrophosphate (HMP-PP) to 4-amino-2-methyl-5-hydroxymethylpyrimidine phosphate (HMP-P). This Escherichia coli (strain 55989 / EAEC) protein is HMP-PP phosphatase.